The primary structure comprises 119 residues: MAEHNELGKKGEELAVEYLRLKEYEILELNYRYQKAEVDIIAKRGNTLIAAEVKTRSTPEFGNPQDFVKPKQIQQLVKAVNHYVEEGELDVEVRFDIIAIIKNKAGTKIEHIQDAFFYF.

It belongs to the UPF0102 family.

The polypeptide is UPF0102 protein GFO_3098 (Christiangramia forsetii (strain DSM 17595 / CGMCC 1.15422 / KT0803) (Gramella forsetii)).